The following is a 121-amino-acid chain: MIQQESFLTVADNSGAKRIQCIRVLGTNRRYAHVGDVIVAAVKDAMPNMGVKKSDVVKAVVVRTKATLRRDTGNSIRFDDNAAVIINDDKNPKGTRVFGPVARELRERNFTKIVSLAPEVI.

It belongs to the universal ribosomal protein uL14 family. As to quaternary structure, part of the 50S ribosomal subunit. Forms a cluster with proteins L3 and L19. In the 70S ribosome, L14 and L19 interact and together make contacts with the 16S rRNA in bridges B5 and B8.

Its function is as follows. Binds to 23S rRNA. Forms part of two intersubunit bridges in the 70S ribosome. This chain is Large ribosomal subunit protein uL14, found in Synechococcus sp. (strain WH7803).